The primary structure comprises 201 residues: Probable chemoreceptor glutamine deamidase CheD (201 aa).

This sequence belongs to the CheD family.

The catalysed reaction is L-glutaminyl-[protein] + H2O = L-glutamyl-[protein] + NH4(+). In terms of biological role, probably deamidates glutamine residues to glutamate on methyl-accepting chemotaxis receptors (MCPs), playing an important role in chemotaxis. This chain is Probable chemoreceptor glutamine deamidase CheD, found in Chlorobium luteolum (strain DSM 273 / BCRC 81028 / 2530) (Pelodictyon luteolum).